We begin with the raw amino-acid sequence, 103 residues long: UPF0091 protein PH0944 (103 aa).

It belongs to the UPF0091 family.

This Pyrococcus horikoshii (strain ATCC 700860 / DSM 12428 / JCM 9974 / NBRC 100139 / OT-3) protein is UPF0091 protein PH0944.